Consider the following 325-residue polypeptide: Glutarate 2-hydroxylase (325 aa).

Fe cation contacts are provided by His-160, Asp-162, and His-292.

It belongs to the glutarate hydroxylase family. In terms of assembly, homotetramer. Fe(2+) is required as a cofactor.

The catalysed reaction is glutarate + 2-oxoglutarate + O2 = (S)-2-hydroxyglutarate + succinate + CO2. Its pathway is amino-acid degradation. Its function is as follows. Acts as an alpha-ketoglutarate-dependent dioxygenase catalyzing hydroxylation of glutarate (GA) to L-2-hydroxyglutarate (L2HG). Functions in a L-lysine degradation pathway that proceeds via cadaverine, glutarate and L-2-hydroxyglutarate. The polypeptide is Glutarate 2-hydroxylase (Escherichia coli O157:H7).